A 130-amino-acid chain; its full sequence is Small ribosomal subunit protein uS9 (130 aa).

A disordered region spans residues 111–130; the sequence is KERRKYGLKKARKAPQFSKR.

The protein belongs to the universal ribosomal protein uS9 family.

This is Small ribosomal subunit protein uS9 from Thermoanaerobacter sp. (strain X514).